Here is a 262-residue protein sequence, read N- to C-terminus: MSDILNKIVATKHEEIAAARAHRGLVSLRDEAEARTDVRGFEAAMRAKIAAGQAAVIAEVKKASPSKGVLREDFRPAEIAASYERHGAACLSVLTDALYFQGCADYLRQARAACALPVLRKDFMVDEYQVHEARAMGADAILLIAACLDDAQMADLEAVALAHRMSVLVEVHDRDELQRALRLKTPLLGINNRNLRTFEVTLDTTLGMLGEVPSDRLLVTESGILGRDDVQRMRAAQVHAFLVGEAFMRASDPGVALAALFA.

Belongs to the TrpC family.

It catalyses the reaction 1-(2-carboxyphenylamino)-1-deoxy-D-ribulose 5-phosphate + H(+) = (1S,2R)-1-C-(indol-3-yl)glycerol 3-phosphate + CO2 + H2O. Its pathway is amino-acid biosynthesis; L-tryptophan biosynthesis; L-tryptophan from chorismate: step 4/5. This Leptothrix cholodnii (strain ATCC 51168 / LMG 8142 / SP-6) (Leptothrix discophora (strain SP-6)) protein is Indole-3-glycerol phosphate synthase.